The chain runs to 299 residues: Glycine--tRNA ligase alpha subunit (299 aa).

It belongs to the class-II aminoacyl-tRNA synthetase family. As to quaternary structure, tetramer of two alpha and two beta subunits.

Its subcellular location is the cytoplasm. The catalysed reaction is tRNA(Gly) + glycine + ATP = glycyl-tRNA(Gly) + AMP + diphosphate. This Synechocystis sp. (strain ATCC 27184 / PCC 6803 / Kazusa) protein is Glycine--tRNA ligase alpha subunit (glyQ).